The chain runs to 338 residues: Ornithine carbamoyltransferase (338 aa).

Residues 56–59, Gln-83, Arg-107, and 134–137 each bind carbamoyl phosphate; these read STRT and HPTQ. L-ornithine is bound by residues Asn-168, Asp-232, and 236-237; that span reads SM. Residues 274-275 and Arg-320 each bind carbamoyl phosphate; that span reads CL.

It belongs to the aspartate/ornithine carbamoyltransferase superfamily. OTCase family.

The protein resides in the cytoplasm. It catalyses the reaction carbamoyl phosphate + L-ornithine = L-citrulline + phosphate + H(+). Its pathway is amino-acid biosynthesis; L-arginine biosynthesis; L-arginine from L-ornithine and carbamoyl phosphate: step 1/3. Its function is as follows. Reversibly catalyzes the transfer of the carbamoyl group from carbamoyl phosphate (CP) to the N(epsilon) atom of ornithine (ORN) to produce L-citrulline. This is Ornithine carbamoyltransferase from Photorhabdus laumondii subsp. laumondii (strain DSM 15139 / CIP 105565 / TT01) (Photorhabdus luminescens subsp. laumondii).